The chain runs to 437 residues: Enolase 1 (437 aa).

Q164 is a (2R)-2-phosphoglycerate binding site. E206 serves as the catalytic Proton donor. Mg(2+) is bound by residues D244, E289, and D316. Residues K341, R370, S371, and K392 each contribute to the (2R)-2-phosphoglycerate site. Residue K341 is the Proton acceptor of the active site.

This sequence belongs to the enolase family. Requires Mg(2+) as cofactor.

Its subcellular location is the cytoplasm. It localises to the secreted. The protein resides in the cell surface. The catalysed reaction is (2R)-2-phosphoglycerate = phosphoenolpyruvate + H2O. It participates in carbohydrate degradation; glycolysis; pyruvate from D-glyceraldehyde 3-phosphate: step 4/5. Functionally, catalyzes the reversible conversion of 2-phosphoglycerate (2-PG) into phosphoenolpyruvate (PEP). It is essential for the degradation of carbohydrates via glycolysis. This Desulfitobacterium hafniense (strain Y51) protein is Enolase 1.